We begin with the raw amino-acid sequence, 206 residues long: Dephospho-CoA kinase (206 aa).

Residues 4–200 form the DPCK domain; that stretch reads TVALTGGIGS…ASYLKLASQF (197 aa). An ATP-binding site is contributed by 12 to 17; sequence GSGKST.

Belongs to the CoaE family.

The protein resides in the cytoplasm. It catalyses the reaction 3'-dephospho-CoA + ATP = ADP + CoA + H(+). Its pathway is cofactor biosynthesis; coenzyme A biosynthesis; CoA from (R)-pantothenate: step 5/5. In terms of biological role, catalyzes the phosphorylation of the 3'-hydroxyl group of dephosphocoenzyme A to form coenzyme A. The chain is Dephospho-CoA kinase from Salmonella typhimurium (strain LT2 / SGSC1412 / ATCC 700720).